Reading from the N-terminus, the 974-residue chain is Apical junction component 1 homolog (974 aa).

3 disordered regions span residues 23–137, 201–233, and 306–326; these read PGLT…PSYP, ARSSRSCAPRETTSWARTAPQFHGLTVPGPRHV, and CSRPYLSEEPPRPSPRRGGSY. At S52 the chain carries Phosphoserine. A compositionally biased stretch (pro residues) spans 69–79; the sequence is EPPPPEPAPPR. The span at 116–134 shows a compositional bias: basic and acidic residues; it reads RGREAQRAVRVEGSPRREP. Position 129 is a phosphoserine (S129). A compositionally biased stretch (polar residues) spans 201–216; it reads ARSSRSCAPRETTSWA. The residue at position 322 (R322) is an Omega-N-methylarginine. Phosphoserine occurs at positions 468, 509, and 512. The segment at 539–576 is disordered; the sequence is DLRSVDRPTAKGWELPGGRPRQPVSTVPEGPASSRQRS. S593 carries the post-translational modification Phosphoserine. The disordered stretch occupies residues 618–661; it reads AGPGGATLLAPSRSPPASAGSTEEPTGSGEAADASPEPSADEDD. Residues 623–636 show a composition bias toward low complexity; it reads ATLLAPSRSPPASA. R749 is modified (asymmetric dimethylarginine; alternate). An Omega-N-methylarginine; alternate modification is found at R749.

It localises to the apical cell membrane. It is found in the cell projection. Its subcellular location is the cilium. The protein localises to the cell junction. The protein resides in the adherens junction. Functionally, may be involved in the control of adherens junction integrity. The protein is Apical junction component 1 homolog (Ajm1) of Mus musculus (Mouse).